The following is a 151-amino-acid chain: Probable ubiquitin-conjugating enzyme E2 W-B (151 aa).

Positions 3-151 (SMQKRLQKEL…TKWWYHDDTC (149 aa)) constitute a UBC core domain. Cys-91 functions as the Glycyl thioester intermediate in the catalytic mechanism.

The protein belongs to the ubiquitin-conjugating enzyme family.

It is found in the nucleus. It catalyses the reaction S-ubiquitinyl-[E1 ubiquitin-activating enzyme]-L-cysteine + [E2 ubiquitin-conjugating enzyme]-L-cysteine = [E1 ubiquitin-activating enzyme]-L-cysteine + S-ubiquitinyl-[E2 ubiquitin-conjugating enzyme]-L-cysteine.. The catalysed reaction is S-ubiquitinyl-[E1 ubiquitin-activating enzyme]-L-cysteine + [acceptor protein]-N-terminal-amino acid = [E1 ubiquitin-activating enzyme]-L-cysteine + N-terminal-ubiquitinyl-[acceptor protein].. It participates in protein modification; protein ubiquitination. In terms of biological role, accepts ubiquitin from the E1 complex and catalyzes its covalent attachment to other proteins. Catalyzes monoubiquitination. Involved in degradation of misfolded chaperone substrate and DNA repair. The sequence is that of Probable ubiquitin-conjugating enzyme E2 W-B (ube2wb) from Danio rerio (Zebrafish).